Here is a 329-residue protein sequence, read N- to C-terminus: Holliday junction branch migration complex subunit RuvB (329 aa).

Residues 1-20 (MSRILEGDPVEGEKSWENEL) are disordered. Residues 1–181 (MSRILEGDPV…FGIVERLQFY (181 aa)) are large ATPase domain (RuvB-L). Over residues 11–20 (EGEKSWENEL) the composition is skewed to basic and acidic residues. Residues Leu20, Arg21, Gly62, Lys65, Thr66, Thr67, 128–130 (EDY), Arg171, Tyr181, and Arg218 each bind ATP. Thr66 serves as a coordination point for Mg(2+). Residues 182–252 (DKDALRQILM…IAVYALNQLG (71 aa)) form a small ATPAse domain (RuvB-S) region. The head domain (RuvB-H) stretch occupies residues 255 to 329 (QYGLDLMDRR…FAKSSVLADK (75 aa)). 3 residues coordinate DNA: Arg291, Lys310, and Arg315.

The protein belongs to the RuvB family. Homohexamer. Forms an RuvA(8)-RuvB(12)-Holliday junction (HJ) complex. HJ DNA is sandwiched between 2 RuvA tetramers; dsDNA enters through RuvA and exits via RuvB. An RuvB hexamer assembles on each DNA strand where it exits the tetramer. Each RuvB hexamer is contacted by two RuvA subunits (via domain III) on 2 adjacent RuvB subunits; this complex drives branch migration. In the full resolvosome a probable DNA-RuvA(4)-RuvB(12)-RuvC(2) complex forms which resolves the HJ.

The protein localises to the cytoplasm. The enzyme catalyses ATP + H2O = ADP + phosphate + H(+). The RuvA-RuvB-RuvC complex processes Holliday junction (HJ) DNA during genetic recombination and DNA repair, while the RuvA-RuvB complex plays an important role in the rescue of blocked DNA replication forks via replication fork reversal (RFR). RuvA specifically binds to HJ cruciform DNA, conferring on it an open structure. The RuvB hexamer acts as an ATP-dependent pump, pulling dsDNA into and through the RuvAB complex. RuvB forms 2 homohexamers on either side of HJ DNA bound by 1 or 2 RuvA tetramers; 4 subunits per hexamer contact DNA at a time. Coordinated motions by a converter formed by DNA-disengaged RuvB subunits stimulates ATP hydrolysis and nucleotide exchange. Immobilization of the converter enables RuvB to convert the ATP-contained energy into a lever motion, pulling 2 nucleotides of DNA out of the RuvA tetramer per ATP hydrolyzed, thus driving DNA branch migration. The RuvB motors rotate together with the DNA substrate, which together with the progressing nucleotide cycle form the mechanistic basis for DNA recombination by continuous HJ branch migration. Branch migration allows RuvC to scan DNA until it finds its consensus sequence, where it cleaves and resolves cruciform DNA. The polypeptide is Holliday junction branch migration complex subunit RuvB (Bdellovibrio bacteriovorus (strain ATCC 15356 / DSM 50701 / NCIMB 9529 / HD100)).